Consider the following 357-residue polypeptide: 4-hydroxy-3-methylbut-2-en-1-yl diphosphate synthase (flavodoxin) (357 aa).

Positions 265, 268, 300, and 307 each coordinate [4Fe-4S] cluster.

Belongs to the IspG family. In terms of assembly, homodimer. The cofactor is [4Fe-4S] cluster.

It catalyses the reaction (2E)-4-hydroxy-3-methylbut-2-enyl diphosphate + oxidized [flavodoxin] + H2O + 2 H(+) = 2-C-methyl-D-erythritol 2,4-cyclic diphosphate + reduced [flavodoxin]. The protein operates within isoprenoid biosynthesis; isopentenyl diphosphate biosynthesis via DXP pathway; isopentenyl diphosphate from 1-deoxy-D-xylulose 5-phosphate: step 5/6. Functionally, converts 2C-methyl-D-erythritol 2,4-cyclodiphosphate (ME-2,4cPP) into 1-hydroxy-2-methyl-2-(E)-butenyl 4-diphosphate. The chain is 4-hydroxy-3-methylbut-2-en-1-yl diphosphate synthase (flavodoxin) from Aquifex aeolicus (strain VF5).